The primary structure comprises 564 residues: Keratin, type II cytoskeletal 6C (564 aa).

Positions 1–11 are enriched in low complexity; the sequence is MASTSTTIRSH. The segment at 1–23 is disordered; it reads MASTSTTIRSHSSSRRGFSANSA. At alanine 2 the chain carries N-acetylalanine. The segment at 2–162 is head; it reads ASTSTTIRSH…DPAIQRVRAE (161 aa). A Phosphoserine modification is found at serine 60. Residues 163–198 are coil 1A; the sequence is EREQIKTLNNKFASFIDKVRFLEQQNKVLDTKWTLL. The 314-residue stretch at 163–476 folds into the IF rod domain; that stretch reads EREQIKTLNN…KLLEGEECRL (314 aa). Residues 199–217 form a linker 1 region; the sequence is QEQGTKTVRQNLEPLFEQY. The interval 218–309 is coil 1B; the sequence is INNLRRQLDS…ALYDAELSQM (92 aa). Residues 310–333 are linker 12; sequence QTHISDTSVVLSMDNNRNLDLDSI. The tract at residues 334 to 472 is coil 2; sequence IAEVKAQYEE…ATYRKLLEGE (139 aa). Positions 473–564 are tail; it reads ECRLNGEGVG…SSSSRKSYKH (92 aa).

The protein belongs to the intermediate filament family. In terms of assembly, heterodimer of a type I and a type II keratin. KRT6 isomers associate with KRT16 and/or KRT17. Constitutively expressed in distinct types of epithelia such as those in oral mucosa, esophagus, papillae of tongue and hair follicle outer root sheath.

The polypeptide is Keratin, type II cytoskeletal 6C (KRT6C) (Homo sapiens (Human)).